The chain runs to 685 residues: DNA ligase (685 aa).

NAD(+) contacts are provided by residues 47–51, 96–97, and Glu-125; these read DSEYD and SL. The N6-AMP-lysine intermediate role is filled by Lys-127. Residues Arg-148, Glu-185, Lys-304, and Lys-328 each coordinate NAD(+). Zn(2+) is bound by residues Cys-422, Cys-425, Cys-440, and Cys-446. A BRCT domain is found at 605-685; the sequence is ADAQPLKGQT…ALLALFAANR (81 aa).

This sequence belongs to the NAD-dependent DNA ligase family. LigA subfamily. Requires Mg(2+) as cofactor. The cofactor is Mn(2+).

It carries out the reaction NAD(+) + (deoxyribonucleotide)n-3'-hydroxyl + 5'-phospho-(deoxyribonucleotide)m = (deoxyribonucleotide)n+m + AMP + beta-nicotinamide D-nucleotide.. In terms of biological role, DNA ligase that catalyzes the formation of phosphodiester linkages between 5'-phosphoryl and 3'-hydroxyl groups in double-stranded DNA using NAD as a coenzyme and as the energy source for the reaction. It is essential for DNA replication and repair of damaged DNA. The polypeptide is DNA ligase (Shewanella sp. (strain W3-18-1)).